A 119-amino-acid chain; its full sequence is Ribosome-binding factor A (119 aa).

This sequence belongs to the RbfA family. In terms of assembly, monomer. Binds 30S ribosomal subunits, but not 50S ribosomal subunits or 70S ribosomes.

The protein localises to the cytoplasm. In terms of biological role, one of several proteins that assist in the late maturation steps of the functional core of the 30S ribosomal subunit. Associates with free 30S ribosomal subunits (but not with 30S subunits that are part of 70S ribosomes or polysomes). Required for efficient processing of 16S rRNA. May interact with the 5'-terminal helix region of 16S rRNA. The polypeptide is Ribosome-binding factor A (Chlorobium limicola (strain DSM 245 / NBRC 103803 / 6330)).